We begin with the raw amino-acid sequence, 81 residues long: Sulfur carrier protein TusA (81 aa).

C19 (cysteine persulfide intermediate) is an active-site residue.

It belongs to the sulfur carrier protein TusA family. In terms of assembly, interacts with IscS.

The protein resides in the cytoplasm. The protein operates within tRNA modification. Its function is as follows. Sulfur carrier protein involved in sulfur trafficking in the cell. Part of a sulfur-relay system required for 2-thiolation during synthesis of 2-thiouridine of the modified wobble base 5-methylaminomethyl-2-thiouridine (mnm(5)s(2)U) in tRNA. Interacts with IscS and stimulates its cysteine desulfurase activity. Accepts an activated sulfur from IscS, which is then transferred to TusD, and thus determines the direction of sulfur flow from IscS to 2-thiouridine formation. Also appears to be involved in sulfur transfer for the biosynthesis of molybdopterin. This Serratia proteamaculans (strain 568) protein is Sulfur carrier protein TusA.